The sequence spans 424 residues: Zinc finger and BTB domain-containing protein 6 (424 aa).

A BTB domain is found at 33–97; it reads CDVSIYINDT…CYTGALEVKR (65 aa). Residue Ser202 is modified to Phosphoserine. 4 consecutive C2H2-type zinc fingers follow at residues 301–323, 326–348, 354–376, and 382–405; these read HQCP…LKMH, FLCL…IRGH, FQCT…LNIH, and YKCH…TSLH. Residues 403 to 424 are disordered; it reads SLHGRSSGEKLPRHDLERQNLL. Residues 408–424 are compositionally biased toward basic and acidic residues; that stretch reads SSGEKLPRHDLERQNLL.

The protein resides in the nucleus. In terms of biological role, may be involved in transcriptional regulation. This is Zinc finger and BTB domain-containing protein 6 (ZBTB6) from Bos taurus (Bovine).